The following is a 340-amino-acid chain: Phenylalanine--tRNA ligase alpha subunit (340 aa).

Glu255 serves as a coordination point for Mg(2+).

This sequence belongs to the class-II aminoacyl-tRNA synthetase family. Phe-tRNA synthetase alpha subunit type 1 subfamily. As to quaternary structure, tetramer of two alpha and two beta subunits. Mg(2+) is required as a cofactor.

The protein localises to the cytoplasm. It carries out the reaction tRNA(Phe) + L-phenylalanine + ATP = L-phenylalanyl-tRNA(Phe) + AMP + diphosphate + H(+). The sequence is that of Phenylalanine--tRNA ligase alpha subunit from Exiguobacterium sp. (strain ATCC BAA-1283 / AT1b).